Reading from the N-terminus, the 58-residue chain is UPF0391 membrane protein Maqu_2901 (58 aa).

Transmembrane regions (helical) follow at residues 4-24 (WAIV…GGIA) and 28-48 (AGFA…SLVV).

Belongs to the UPF0391 family.

Its subcellular location is the cell membrane. This chain is UPF0391 membrane protein Maqu_2901, found in Marinobacter nauticus (strain ATCC 700491 / DSM 11845 / VT8) (Marinobacter aquaeolei).